The primary structure comprises 518 residues: Allene oxide synthase, chloroplastic (518 aa).

The N-terminal 33 residues, 1 to 33 (MASISTPFPISLHPKTVRSKPLKFRVLTRPIKA), are a transit peptide targeting the chloroplast. The heme b site is built by lysine 133, histidine 164, and lysine 168. Residues asparagine 321 and threonine 389 each contribute to the (13S)-hydroperoxy-(9Z,11E)-octadecadienoate site. Residues asparagine 321 and threonine 389 each contribute to the (13S)-hydroperoxy-(9Z,11E,15Z)-octadecatrienoate site. Heme b is bound by residues lysine 469 and cysteine 471.

The protein belongs to the cytochrome P450 family. Requires heme b as cofactor.

Its subcellular location is the plastid. The protein localises to the chloroplast. The protein resides in the plastoglobule. It catalyses the reaction (13S)-hydroperoxy-(9Z,11E,15Z)-octadecatrienoate = (9Z,13S,15Z)-12,13-epoxyoctadeca-9,11,15-trienoate + H2O. It carries out the reaction (13S)-hydroperoxy-(9Z,11E)-octadecadienoate = (9Z,13S)-12,13-epoxyoctadeca-9,11-dienoate + H2O. It functions in the pathway lipid metabolism; oxylipin biosynthesis. In terms of biological role, cytochrome P450 enzyme involved in the biosynthesis of oxylipin jasmonates, important phytohormones acting as growth regulators and signaling molecules for plant defense. Functions as an allene oxide synthase that converts hydroperoxy fatty acids to unstable allene epoxides. Catalyzes the dehydration of 13-HPOTE ((13S)-hydroperoxy-(9Z,11E,15Z)-octadecatrienoate), as well as 13-HPODE ((13S)-hydroperoxy-(9Z,11E)-octadecadienoate). This chain is Allene oxide synthase, chloroplastic (CYP74A), found in Arabidopsis thaliana (Mouse-ear cress).